The chain runs to 332 residues: ADP-L-glycero-D-manno-heptose-6-epimerase (332 aa).

NADP(+)-binding positions include 10–11 (FI), 31–32 (DD), lysine 38, 74–78 (QGACS), and asparagine 91. The active-site Proton acceptor is tyrosine 138. Lysine 142 lines the NADP(+) pocket. A substrate-binding site is contributed by asparagine 167. Positions 168 and 176 each coordinate NADP(+). Residue lysine 176 is the Proton acceptor of the active site. Substrate-binding positions include arginine 178, histidine 185, 199 to 202 (FSGW), arginine 212, and tyrosine 291.

Belongs to the NAD(P)-dependent epimerase/dehydratase family. HldD subfamily. As to quaternary structure, homopentamer. Requires NADP(+) as cofactor.

It catalyses the reaction ADP-D-glycero-beta-D-manno-heptose = ADP-L-glycero-beta-D-manno-heptose. The protein operates within nucleotide-sugar biosynthesis; ADP-L-glycero-beta-D-manno-heptose biosynthesis; ADP-L-glycero-beta-D-manno-heptose from D-glycero-beta-D-manno-heptose 7-phosphate: step 4/4. Catalyzes the interconversion between ADP-D-glycero-beta-D-manno-heptose and ADP-L-glycero-beta-D-manno-heptose via an epimerization at carbon 6 of the heptose. The protein is ADP-L-glycero-D-manno-heptose-6-epimerase of Bordetella avium (strain 197N).